Consider the following 340-residue polypeptide: MPSIRLADLAQQLDAQVHGDGDLVITGIASMHSAQPEQITFLSNSRYREQLASCNAGAVVLTEADLPFCKVAALVVENPYFTYARMAQIMDTTPQPAQDIAPSAVISPQATLGEGVSVGANAVIESGVVLGDNVVIGAGCFIGKNTHIGAGSRLWANVSIYHEVVIGQNCLIQSGTVIGADGFGYANDRGNWVKIPQLGSVHIGDRVEIGACTTIDRGALDNTIIGNGVIIDNQCQIAHNVVIGDNTAVAGGVIMAGSLKVGRYCMIGGASVINGHMEICDKVTITGMGMVMRPITEPGLYSSGIPLQPNKMWRKTAALVMNIDGINKRLKAVERKIDKE.

Histidine 239 functions as the Proton acceptor in the catalytic mechanism.

It belongs to the transferase hexapeptide repeat family. LpxD subfamily. Homotrimer.

The catalysed reaction is a UDP-3-O-[(3R)-3-hydroxyacyl]-alpha-D-glucosamine + a (3R)-hydroxyacyl-[ACP] = a UDP-2-N,3-O-bis[(3R)-3-hydroxyacyl]-alpha-D-glucosamine + holo-[ACP] + H(+). It carries out the reaction UDP-3-O-[(3R)-3-hydroxytetradecanoyl]-alpha-D-glucosamine + (3R)-hydroxytetradecanoyl-[ACP] = UDP-2-N,3-O-bis[(3R)-3-hydroxytetradecanoyl]-alpha-D-glucosamine + holo-[ACP] + H(+). The protein operates within glycolipid biosynthesis; lipid IV(A) biosynthesis; lipid IV(A) from (3R)-3-hydroxytetradecanoyl-[acyl-carrier-protein] and UDP-N-acetyl-alpha-D-glucosamine: step 3/6. Catalyzes the N-acylation of UDP-3-O-(hydroxytetradecanoyl)glucosamine using 3-hydroxytetradecanoyl-ACP as the acyl donor. Is involved in the biosynthesis of lipid A, a phosphorylated glycolipid that anchors the lipopolysaccharide to the outer membrane of the cell. The sequence is that of UDP-3-O-(3-hydroxymyristoyl)glucosamine N-acyltransferase from Yersinia pestis bv. Antiqua (strain Antiqua).